The chain runs to 371 residues: Anhydro-N-acetylmuramic acid kinase (371 aa).

12–19 serves as a coordination point for ATP; it reads GTSADGID.

Belongs to the anhydro-N-acetylmuramic acid kinase family.

The catalysed reaction is 1,6-anhydro-N-acetyl-beta-muramate + ATP + H2O = N-acetyl-D-muramate 6-phosphate + ADP + H(+). It functions in the pathway amino-sugar metabolism; 1,6-anhydro-N-acetylmuramate degradation. Its pathway is cell wall biogenesis; peptidoglycan recycling. In terms of biological role, catalyzes the specific phosphorylation of 1,6-anhydro-N-acetylmuramic acid (anhMurNAc) with the simultaneous cleavage of the 1,6-anhydro ring, generating MurNAc-6-P. Is required for the utilization of anhMurNAc either imported from the medium or derived from its own cell wall murein, and thus plays a role in cell wall recycling. This Saccharophagus degradans (strain 2-40 / ATCC 43961 / DSM 17024) protein is Anhydro-N-acetylmuramic acid kinase.